We begin with the raw amino-acid sequence, 192 residues long: MTQDPHKMFDEWMDEAKKAETDDPTAMALATASKQAFPCVRMMLLKGHTKDGFVFFTNLGSRKGHELLENPVATLLFHWKKLRRQVRIEGAATLISDEEADAYFATRARKSQLGAWASEQSRPLPARDVFEKRIADIEARYEGKDVPRPPYWTGFRVSPIRMEFWNDREFRLHERELFTLNDGRWQSEFLYP.

FMN contacts are provided by residues 41 to 46 (RMMLLK), 56 to 57 (FT), Arg62, Lys63, and Gln85. Substrate is bound at residue Lys46. Residues Tyr103, Arg107, and Ser111 each coordinate substrate. FMN contacts are provided by residues 120–121 (QS) and Trp165. Position 171–173 (171–173 (RLH)) interacts with substrate. Residue Arg175 participates in FMN binding.

It belongs to the pyridoxamine 5'-phosphate oxidase family. Homodimer. FMN serves as cofactor.

The catalysed reaction is pyridoxamine 5'-phosphate + O2 + H2O = pyridoxal 5'-phosphate + H2O2 + NH4(+). The enzyme catalyses pyridoxine 5'-phosphate + O2 = pyridoxal 5'-phosphate + H2O2. Its pathway is cofactor metabolism; pyridoxal 5'-phosphate salvage; pyridoxal 5'-phosphate from pyridoxamine 5'-phosphate: step 1/1. It functions in the pathway cofactor metabolism; pyridoxal 5'-phosphate salvage; pyridoxal 5'-phosphate from pyridoxine 5'-phosphate: step 1/1. Catalyzes the oxidation of either pyridoxine 5'-phosphate (PNP) or pyridoxamine 5'-phosphate (PMP) into pyridoxal 5'-phosphate (PLP). In Zymomonas mobilis subsp. mobilis (strain ATCC 31821 / ZM4 / CP4), this protein is Pyridoxine/pyridoxamine 5'-phosphate oxidase.